The primary structure comprises 197 residues: Probable UbiX-like flavin prenyltransferase (197 aa).

FMN-binding positions include 9–11 (GAT), Ser36, 87–90 (SMKT), and Arg122.

It belongs to the UbiX/PAD1 family. YclB subfamily. Homododecamer.

The catalysed reaction is dimethylallyl phosphate + FMNH2 = prenylated FMNH2 + phosphate. Flavin prenyltransferase that catalyzes the synthesis of the prenylated FMN cofactor (prenyl-FMN) for phenolic acid decarboxylase C. Involved in the decarboxylation and detoxification of phenolic derivatives under both aerobic and anaerobic conditions. The sequence is that of Probable UbiX-like flavin prenyltransferase (ecdB) from Escherichia coli O111:H-.